The chain runs to 142 residues: Large ribosomal subunit protein uL13 (142 aa).

The protein belongs to the universal ribosomal protein uL13 family. As to quaternary structure, part of the 50S ribosomal subunit.

In terms of biological role, this protein is one of the early assembly proteins of the 50S ribosomal subunit, although it is not seen to bind rRNA by itself. It is important during the early stages of 50S assembly. The polypeptide is Large ribosomal subunit protein uL13 (Idiomarina loihiensis (strain ATCC BAA-735 / DSM 15497 / L2-TR)).